Here is a 253-residue protein sequence, read N- to C-terminus: Chemotaxis protein PomA (253 aa).

4 helical membrane-spanning segments follow: residues 6–26 (LLGL…GGSI), 28–48 (MFVD…VVLM), 146–166 (FGDV…VAML), and 180–200 (AVAL…FFPI). Over 201–253 (ADKLSLRRDQETLNRRLIMDGVLAIQDGQNPRVIDSYLKNYLNEGKRALEIDE) the chain is Cytoplasmic.

The protein belongs to the MotA family. As to quaternary structure, each stator complex is composed of 4 PomA and 2 PomB subunits. 2 A subunits and 1 B subunit are thought to form a single ion channel, so that each stator complex contains two channels.

Its subcellular location is the cell inner membrane. Functionally, pomA and PomB comprise the stator element of the flagellar motor complex. Required for rotation of the flagellar motor. Probable transmembrane proton channel. The polypeptide is Chemotaxis protein PomA (pomA) (Vibrio alginolyticus).